Reading from the N-terminus, the 251-residue chain is Auxin-responsive protein IAA29 (251 aa).

The EAR-like (transcriptional repression) signature appears at 3–7; it reads LDLGL. In terms of domain architecture, PB1 spans 159-246; that stretch reads SMYVKVKMDG…SIIRDRPCAY (88 aa).

The protein belongs to the Aux/IAA family. As to quaternary structure, homodimers and heterodimers.

It localises to the nucleus. In terms of biological role, aux/IAA proteins are short-lived transcriptional factors that function as repressors of early auxin response genes at low auxin concentrations. Repression is thought to result from the interaction with auxin response factors (ARFs), proteins that bind to the auxin-responsive promoter element (AuxRE). Formation of heterodimers with ARF proteins may alter their ability to modulate early auxin response genes expression. The polypeptide is Auxin-responsive protein IAA29 (IAA29) (Arabidopsis thaliana (Mouse-ear cress)).